The following is a 612-amino-acid chain: Apoptosis-inducing factor 1, mitochondrial (612 aa).

Short sequence motifs (mitochondrial localization signal) lie at residues 1–30 (MFRC…PKQR) and 62–88 (KMDN…KTIK). The N-terminal 53 residues, 1-53 (MFRCGGLAGAFKQKLVPLVRSVCVQRPKQRNRLPGNLFQQWRVPLELQMARQM), are a transit peptide targeting the mitochondrion. 2 consecutive propeptides (removed in mature form) follow at residues 54–100 (ASSG…RIMG) and 55–101 (SSGP…IMGL). Position 108 is an N6-succinyllysine (Lys108). Ser115 is subject to Phosphoserine. The FAD-dependent oxidoreductase stretch occupies residues 133-482 (FLLIGGGTAA…KPYWHQSMFW (350 aa)). FAD is bound by residues 137–141 (GGGTA), 163–164 (ED), Arg171, and Lys176. Trp195 contacts NAD(+). Position 232 (Val232) interacts with FAD. Lys254 participates in a covalent cross-link: Glycyl lysine isopeptide (Lys-Gly) (interchain with G-Cter in ubiquitin). A Phosphoserine modification is found at Ser267. Arg284 serves as a coordination point for FAD. NAD(+) contacts are provided by residues 307–310 (GGFL), Glu335, and Lys341. Position 370 is a phosphoserine (Ser370). Lys387 bears the N6-acetyllysine mark. Residue Gly398 coordinates NAD(+). Position 437 (Asp437) interacts with FAD. A Nuclear localization signal motif is present at residues 445-450 (KLGRRR). Residues 452–453 (EH), Trp482, and Glu492 contribute to the NAD(+) site. Residues 453-454 (HH) and Trp482 contribute to the FAD site. Residues 512–528 (AQDNPKSATEQSGTGIR) are compositionally biased toward polar residues. A disordered region spans residues 512-551 (AQDNPKSATEQSGTGIRSESETESEASEITIPPSDPAVPQ). A Phosphothreonine modification is found at Thr520. Ser523 and Ser529 each carry phosphoserine. An NAD(+)-binding site is contributed by Asn582. An N6-acetyllysine modification is found at Lys592.

The protein belongs to the FAD-dependent oxidoreductase family. Monomer (oxidized form). Homodimer (reduced form). Upon reduction with NADH, undergoes dimerization and forms tight, long-lived FADH2-NAD charge transfer complexes (CTC) resistant to oxidation. Also dimerizes with isoform 3 preventing its release from mitochondria. Interacts with XIAP/BIRC4. Interacts (via N-terminus) with EIF3G (via C-terminus). Interacts with PRELID1. Interacts with CHCHD4; the interaction increases in presence of NADH. Interacts with processed form of PARP1 (Poly [ADP-ribose] polymerase 1, processed C-terminus); interaction is mediated with poly-ADP-ribose chains attached to PARP1, promoting translocation into the nucleus. The cofactor is FAD. Post-translationally, under normal conditions, a 54-residue N-terminal segment is first proteolytically removed during or just after translocation into the mitochondrial intermembrane space (IMS) by the mitochondrial processing peptidase (MPP) to form the inner-membrane-anchored mature form (AIFmit). During apoptosis, it is further proteolytically processed at amino-acid position 101 leading to the generation of the mature form, which is confined to the mitochondrial IMS in a soluble form (AIFsol). AIFsol is released to the cytoplasm in response to specific death signals, and translocated to the nucleus, where it induces nuclear apoptosis in a caspase-independent manner. In terms of processing, ubiquitination by XIAP/BIRC4 does not lead to proteasomal degradation. Ubiquitination at Lys-254 by XIAP/BIRC4 blocks its ability to bind DNA and induce chromatin degradation, thereby inhibiting its ability to induce cell death.

The protein resides in the mitochondrion intermembrane space. Its subcellular location is the mitochondrion inner membrane. It localises to the cytoplasm. It is found in the nucleus. The protein localises to the perinuclear region. It carries out the reaction A + NADH + H(+) = AH2 + NAD(+). Functionally, functions both as NADH oxidoreductase and as regulator of apoptosis. In response to apoptotic stimuli, it is released from the mitochondrion intermembrane space into the cytosol and to the nucleus, where it functions as a proapoptotic factor in a caspase-independent pathway. Release into the cytoplasm is mediated upon binding to poly-ADP-ribose chains. The soluble form (AIFsol) found in the nucleus induces 'parthanatos' i.e. caspase-independent fragmentation of chromosomal DNA. Binds to DNA in a sequence-independent manner. Interacts with EIF3G, and thereby inhibits the EIF3 machinery and protein synthesis, and activates caspase-7 to amplify apoptosis. Plays a critical role in caspase-independent, pyknotic cell death in hydrogen peroxide-exposed cells. In contrast, participates in normal mitochondrial metabolism. Plays an important role in the regulation of respiratory chain biogenesis by interacting with CHCHD4 and controlling CHCHD4 mitochondrial import. This is Apoptosis-inducing factor 1, mitochondrial (Aifm1) from Rattus norvegicus (Rat).